Reading from the N-terminus, the 346-residue chain is UDP-3-O-acylglucosamine N-acyltransferase (346 aa).

His253 serves as the catalytic Proton acceptor.

Belongs to the transferase hexapeptide repeat family. LpxD subfamily. Homotrimer.

It catalyses the reaction a UDP-3-O-[(3R)-3-hydroxyacyl]-alpha-D-glucosamine + a (3R)-hydroxyacyl-[ACP] = a UDP-2-N,3-O-bis[(3R)-3-hydroxyacyl]-alpha-D-glucosamine + holo-[ACP] + H(+). Its pathway is bacterial outer membrane biogenesis; LPS lipid A biosynthesis. Its function is as follows. Catalyzes the N-acylation of UDP-3-O-acylglucosamine using 3-hydroxyacyl-ACP as the acyl donor. Is involved in the biosynthesis of lipid A, a phosphorylated glycolipid that anchors the lipopolysaccharide to the outer membrane of the cell. The chain is UDP-3-O-acylglucosamine N-acyltransferase from Rickettsia akari (strain Hartford).